The following is a 470-amino-acid chain: Poly(A) polymerase catalytic subunit (470 aa).

Active-site residues include Asp192 and Asp194.

This sequence belongs to the poxviridae poly(A) polymerase catalytic subunit family. In terms of assembly, heterodimer of a large (catalytic) subunit and a small (regulatory) subunit.

The enzyme catalyses RNA(n) + ATP = RNA(n)-3'-adenine ribonucleotide + diphosphate. Polymerase that creates the 3'-poly(A) tail of mRNA's. This chain is Poly(A) polymerase catalytic subunit (PAPL), found in Homo sapiens (Human).